A 316-amino-acid polypeptide reads, in one-letter code: Lys-63-specific deubiquitinase BRCC36 (316 aa).

N-acetylalanine is present on Ala-2. The MPN domain occupies 12–179; the sequence is VHLESDAFLV…YTCFQSIQAQ (168 aa). His-122, His-124, and Asp-135 together coordinate Zn(2+). Residues 122-135 carry the JAMM motif motif; that stretch reads HSHPHITVWPSHVD. Residue Ser-258 is modified to Phosphoserine.

The protein belongs to the peptidase M67A family. BRCC36 subfamily. As to quaternary structure, component of the ARISC complex, at least composed of UIMC1/RAP80, ABRAXAS1, BRCC3/BRCC36, BABAM2 and BABAM1/NBA1. Component of the BRCA1-A complex, at least composed of BRCA1, BARD1, UIMC1/RAP80, ABRAXAS1, BRCC3/BRCC36, babam2 and BABAM1/NBA1. In the BRCA1-A complex, interacts directly with ABRAXAS1 and babam2. Component of the BRISC complex, at least composed of ABRAXAS2, BRCC3/BRCC36, BABAM2 and BABAM1/NBA1. Identified in a complex with SHMT2 and the other subunits of the BRISC complex. In the BRISC complex, interacts directly with ABRAXAS2. Identified in a complex with ABRAXAS2 and NUMA1. The BRISC complex interacts with the CSN complex. Component of the BRCA1/BRCA2 containing complex (BRCC), which also contains BRCA1, BRCA2, BARD1, BABAM2 and RAD51. BRCC is a ubiquitin E3 ligase complex that enhances cellular survival following DNA damage. Interacts with BRCA1. Binds polyubiquitin. Interacts with PWWP2B. Interacts with HDAC1; this interaction is enhanced in the presence of PWWP2B. Zn(2+) serves as cofactor. Heart, brain, placenta, lung, liver, skeletal muscle, kidney and pancreas. Aberrantly expressed in the vast majority of breast tumors.

The protein localises to the nucleus. Its subcellular location is the cytoplasm. The protein resides in the cytoskeleton. It localises to the spindle pole. Its function is as follows. Metalloprotease that specifically cleaves 'Lys-63'-linked polyubiquitin chains. Does not have activity toward 'Lys-48'-linked polyubiquitin chains. Component of the BRCA1-A complex, a complex that specifically recognizes 'Lys-63'-linked ubiquitinated histones H2A and H2AX at DNA lesions sites, leading to target the BRCA1-BARD1 heterodimer to sites of DNA damage at double-strand breaks (DSBs). In the BRCA1-A complex, it specifically removes 'Lys-63'-linked ubiquitin on histones H2A and H2AX, antagonizing the RNF8-dependent ubiquitination at double-strand breaks (DSBs). Catalytic subunit of the BRISC complex, a multiprotein complex that specifically cleaves 'Lys-63'-linked ubiquitin in various substrates. Mediates the specific 'Lys-63'-specific deubiquitination associated with the COP9 signalosome complex (CSN), via the interaction of the BRISC complex with the CSN complex. The BRISC complex is required for normal mitotic spindle assembly and microtubule attachment to kinetochores via its role in deubiquitinating NUMA1. Plays a role in interferon signaling via its role in the deubiquitination of the interferon receptor IFNAR1; deubiquitination increases IFNAR1 activity by enhancing its stability and cell surface expression. Acts as a regulator of the NLRP3 inflammasome by mediating deubiquitination of NLRP3, leading to NLRP3 inflammasome assembly. Down-regulates the response to bacterial lipopolysaccharide (LPS) via its role in IFNAR1 deubiquitination. Deubiquitinates HDAC1 and PWWP2B leading to their stabilization. This is Lys-63-specific deubiquitinase BRCC36 (BRCC3) from Homo sapiens (Human).